The sequence spans 128 residues: Small ribosomal subunit protein uS11 (128 aa).

It belongs to the universal ribosomal protein uS11 family. As to quaternary structure, part of the 30S ribosomal subunit. Interacts with proteins S7 and S18. Binds to IF-3.

Functionally, located on the platform of the 30S subunit, it bridges several disparate RNA helices of the 16S rRNA. Forms part of the Shine-Dalgarno cleft in the 70S ribosome. The sequence is that of Small ribosomal subunit protein uS11 from Vesicomyosocius okutanii subsp. Calyptogena okutanii (strain HA).